The primary structure comprises 248 residues: Probable transcriptional regulatory protein MCA1220 (248 aa).

Belongs to the TACO1 family.

The protein localises to the cytoplasm. The protein is Probable transcriptional regulatory protein MCA1220 of Methylococcus capsulatus (strain ATCC 33009 / NCIMB 11132 / Bath).